The following is a 192-amino-acid chain: Inosine triphosphate pyrophosphatase (192 aa).

Thr-10–Lys-15 is a binding site for ITP. Glu-46 is a Mg(2+) binding site. ITP contacts are provided by residues Lys-58, Asp-74–Thr-75, Lys-91, Phe-149–Asp-152, Lys-172, and His-177–Arg-178.

The protein belongs to the HAM1 NTPase family. As to quaternary structure, homodimer. It depends on Mg(2+) as a cofactor. The cofactor is Mn(2+).

It localises to the cytoplasm. The protein localises to the nucleus. It catalyses the reaction ITP + H2O = IMP + diphosphate + H(+). The enzyme catalyses dITP + H2O = dIMP + diphosphate + H(+). The catalysed reaction is XTP + H2O = XMP + diphosphate + H(+). Pyrophosphatase that hydrolyzes non-canonical purine nucleotides such as inosine triphosphate (ITP), deoxyinosine triphosphate (dITP) or xanthosine 5'-triphosphate (XTP) to their respective monophosphate derivatives. The enzyme does not distinguish between the deoxy- and ribose forms. Probably excludes non-canonical purines from RNA and DNA precursor pools, thus preventing their incorporation into RNA and DNA and avoiding chromosomal lesions. This chain is Inosine triphosphate pyrophosphatase, found in Puccinia graminis f. sp. tritici (strain CRL 75-36-700-3 / race SCCL) (Black stem rust fungus).